The primary structure comprises 336 residues: Methionyl-tRNA formyltransferase (336 aa).

Residue 110–113 (SLLP) participates in (6S)-5,6,7,8-tetrahydrofolate binding.

Belongs to the Fmt family.

It carries out the reaction L-methionyl-tRNA(fMet) + (6R)-10-formyltetrahydrofolate = N-formyl-L-methionyl-tRNA(fMet) + (6S)-5,6,7,8-tetrahydrofolate + H(+). Functionally, attaches a formyl group to the free amino group of methionyl-tRNA(fMet). The formyl group appears to play a dual role in the initiator identity of N-formylmethionyl-tRNA by promoting its recognition by IF2 and preventing the misappropriation of this tRNA by the elongation apparatus. This Prochlorococcus marinus (strain NATL2A) protein is Methionyl-tRNA formyltransferase.